A 342-amino-acid polypeptide reads, in one-letter code: Ribosomal RNA small subunit methyltransferase C (342 aa).

The protein belongs to the methyltransferase superfamily. RsmC family. As to quaternary structure, monomer.

It is found in the cytoplasm. It carries out the reaction guanosine(1207) in 16S rRNA + S-adenosyl-L-methionine = N(2)-methylguanosine(1207) in 16S rRNA + S-adenosyl-L-homocysteine + H(+). Functionally, specifically methylates the guanine in position 1207 of 16S rRNA in the 30S particle. The polypeptide is Ribosomal RNA small subunit methyltransferase C (Shewanella piezotolerans (strain WP3 / JCM 13877)).